The following is a 251-amino-acid chain: Putative cysteine-rich repeat secretory protein 36 (251 aa).

Positions 1–28 (MHSSYSLSKCLVCFTILAIQTLIRRVSS) are cleaved as a signal peptide. 2 consecutive Gnk2-homologous domains span residues 35–139 (YLNH…NSPP) and 144–248 (YENT…LYPF).

The protein belongs to the cysteine-rich repeat secretory protein family.

It localises to the secreted. This is Putative cysteine-rich repeat secretory protein 36 (CRRSP36) from Arabidopsis thaliana (Mouse-ear cress).